We begin with the raw amino-acid sequence, 264 residues long: Apolipoprotein A-I (264 aa).

The first 18 residues, 1–18 (MKAVVLALAVLFLTGSQA), serve as a signal peptide directing secretion. 2 repeat units span residues 67–88 (LHLL…EQLG) and 89–110 (PVTH…QEMN). A 10 X approximate tandem repeats region spans residues 67 to 264 (LHLLDNWDTL…DEASKKLNAQ (198 aa)). Methionine sulfoxide is present on methionine 109. A 3; half-length repeat occupies 111–121 (KDLEEVKVKVQ). 5 tandem repeats follow at residues 122–143 (PYLD…EKVG), 144–165 (PLGA…EKLT), 166–187 (PLGE…TQLA), 188–207 (PYSD…IRDS), and 208–229 (PSLA…EKAK). A 9; half-length repeat occupies 230-240 (PALEDLRQGLM). Copy 10 of the repeat occupies 241–264 (PVLENLKTTVLAAIDEASKKLNAQ).

It belongs to the apolipoprotein A1/A4/E family. Homodimer. Interacts with APOA1BP and CLU. Component of a sperm activating protein complex (SPAP), consisting of APOA1, an immunoglobulin heavy chain, an immunoglobulin light chain and albumin. Interacts with NDRG1. Interacts with SCGB3A2. Interacts with NAXE and YJEFN3. In terms of processing, glycosylated. Post-translationally, palmitoylated. Phosphorylation sites are present in the extracellular medium.

It is found in the secreted. Its function is as follows. Participates in the reverse transport of cholesterol from tissues to the liver for excretion by promoting cholesterol efflux from tissues and by acting as a cofactor for the lecithin cholesterol acyltransferase (LCAT). As part of the SPAP complex, activates spermatozoa motility. In Jaculus jaculus (Lesser Egyptian jerboa), this protein is Apolipoprotein A-I (APOA1).